The chain runs to 59 residues: Putative conotoxin (59 aa).

An N-terminal signal peptide occupies residues 1–25 (MGMRMMFTVFLLVVLATTVVPITLA). A propeptide spanning residues 26–47 (SATDGRNAAANARVSPVISKSS) is cleaved from the precursor.

Belongs to the conotoxin A superfamily. As to expression, expressed by the venom duct.

It is found in the secreted. In terms of biological role, acts as a neurotoxin. In Conus imperialis (Imperial cone), this protein is Putative conotoxin.